A 647-amino-acid chain; its full sequence is C2H2 finger domain transcription factor USV101 (647 aa).

Residues 1–10 (MSFVAPDDRA) show a composition bias toward basic and acidic residues. The disordered stretch occupies residues 1-132 (MSFVAPDDRA…ATGYTPDGQP (132 aa)). Polar residues-rich tracts occupy residues 27–54 (ESTS…SPNQ) and 66–84 (SSHS…STAY). Low complexity predominate over residues 97–122 (PTQQQQQQQSEQHIPSPPSSSNRPPS). 2 consecutive C2H2-type zinc fingers follow at residues 144 to 169 (FRCR…VRKH) and 175 to 197 (FPCH…ATVH). The disordered stretch occupies residues 220 to 647 (QRASREQRRR…VKQQDDKKTQ (428 aa)). The span at 222–248 (ASREQRRRGEVVEVPKGAVERRRETRK) shows a compositional bias: basic and acidic residues. The span at 249–259 (AQAAAAQAAAA) shows a compositional bias: low complexity. A compositionally biased stretch (polar residues) spans 261-278 (GHSQQNSPYAQYHESQWN). Composition is skewed to low complexity over residues 312–327 (SSSA…YDSA), 404–414 (HGAYPPHDAAA), and 421–434 (GYYH…GSYP). Residues 504–515 (RAEDDFGKDDRK) are compositionally biased toward basic and acidic residues. Positions 521–540 (SPSNSQVPDSSTAAHANGAH) are enriched in low complexity. Basic and acidic residues predominate over residues 628–647 (VDKEREKKEEVKQQDDKKTQ).

The protein resides in the nucleus. The protein localises to the cytoplasm. Its function is as follows. Transcription factor that promotes pheromone gene expression, which results in a subsequent increase in cell fusion. Also promotes production of melanin and capsule and thereby is required for full virulence. In Cryptococcus neoformans var. grubii serotype A (strain H99 / ATCC 208821 / CBS 10515 / FGSC 9487) (Filobasidiella neoformans var. grubii), this protein is C2H2 finger domain transcription factor USV101.